The chain runs to 128 residues: S-adenosylmethionine decarboxylase proenzyme (128 aa).

Ser-61 acts as the Schiff-base intermediate with substrate; via pyruvic acid in catalysis. Ser-61 carries the pyruvic acid (Ser); by autocatalysis modification. Catalysis depends on His-66, which acts as the Proton acceptor; for processing activity. The active-site Proton donor; for catalytic activity is the Cys-81.

The protein belongs to the prokaryotic AdoMetDC family. Type 1 subfamily. In terms of assembly, heterotetramer of two alpha and two beta chains arranged as a dimer of alpha/beta heterodimers. Requires pyruvate as cofactor. In terms of processing, is synthesized initially as an inactive proenzyme. Formation of the active enzyme involves a self-maturation process in which the active site pyruvoyl group is generated from an internal serine residue via an autocatalytic post-translational modification. Two non-identical subunits are generated from the proenzyme in this reaction, and the pyruvate is formed at the N-terminus of the alpha chain, which is derived from the carboxyl end of the proenzyme. The post-translation cleavage follows an unusual pathway, termed non-hydrolytic serinolysis, in which the side chain hydroxyl group of the serine supplies its oxygen atom to form the C-terminus of the beta chain, while the remainder of the serine residue undergoes an oxidative deamination to produce ammonia and the pyruvoyl group blocking the N-terminus of the alpha chain.

The catalysed reaction is S-adenosyl-L-methionine + H(+) = S-adenosyl 3-(methylsulfanyl)propylamine + CO2. It functions in the pathway amine and polyamine biosynthesis; S-adenosylmethioninamine biosynthesis; S-adenosylmethioninamine from S-adenosyl-L-methionine: step 1/1. Catalyzes the decarboxylation of S-adenosylmethionine to S-adenosylmethioninamine (dcAdoMet), the propylamine donor required for the synthesis of the polyamines spermine and spermidine from the diamine putrescine. The polypeptide is S-adenosylmethionine decarboxylase proenzyme (Parasynechococcus marenigrum (strain WH8102)).